The chain runs to 210 residues: DNA-directed RNA polymerases I, II, and III subunit RPABC1 (210 aa).

Position 1 is an N-acetylmethionine (methionine 1). Lysine 81 is covalently cross-linked (Glycyl lysine isopeptide (Lys-Gly) (interchain with G-Cter in SUMO2)).

This sequence belongs to the archaeal Rpo5/eukaryotic RPB5 RNA polymerase subunit family. Component of the RNA polymerase I (Pol I), RNA polymerase II (Pol II) and RNA polymerase III (Pol III) complexes consisting of at least 13, 12 and 17 subunits, respectively. Pol I complex consists of a ten-subunit catalytic core composed of POLR1A/RPA1, POLR1B/RPA2, POLR1C/RPAC1, POLR1D/RPAC2, POLR1H/RPA12, POLR2E/RPABC1, POLR2F/RPABC2, POLR2H/RPABC3, POLR2K/RPABC4 and POLR2L/RPABC5; a mobile stalk subunit POLR1F/RPA43 protruding from the core and additional subunits homologous to general transcription factors POLR1E/RPA49 and POLR1G/RPA34. Part of Pol I pre-initiation complex (PIC), in which Pol I core assembles with RRN3 and promoter-bound UTBF and SL1/TIF-IB complex. Pol II complex contains a ten-subunit catalytic core composed of POLR2A/RPB1, POLR2B/RPB2, POLR2C/RPB3, POLR2I/RPB9, POLR2J/RPB11, POLR2E/RPABC1, POLR2F/RPABC2, POLR2H/RPABC3, POLR2K/RPABC4 and POLR2L/RPABC5 and a mobile stalk composed of two subunits POLR2D/RPB4 and POLR2G/RPB7. Part of Pol II(G) complex, in which Pol II core associates with an additional subunit POLR2M; unlike conventional Pol II, Pol II(G) functions as a transcriptional repressor. Part of TBP-based Pol II pre-initiation complex (PIC), in which Pol II core assembles with general transcription factors and other specific initiation factors including GTF2E1, GTF2E2, GTF2F1, GTF2F2, TCEA1, ERCC2, ERCC3, GTF2H2, GTF2H3, GTF2H4, GTF2H5, GTF2A1, GTF2A2, GTF2B and TBP; this large multi-subunit PIC complex mediates DNA unwinding and targets Pol II core to the transcription start site where the first phosphodiester bond forms. In Pol II complex, this subunit is present in 2-fold molar excess over the other subunits. Pol III complex consists of a ten-subunit catalytic core composed of POLR3A/RPC1, POLR3B/RPC2, POLR1C/RPAC1, POLR1D/RPAC2, POLR3K/RPC10, POLR2E/RPABC1, POLR2F/RPABC2, POLR2H/RPABC3, POLR2K/RPABC4 and POLR2L/RPABC5; a mobile stalk composed of two subunits POLR3H/RPC8 and CRCP/RPC9, protruding from the core and functioning primarily in transcription initiation; and additional subunits homologous to general transcription factors of the RNA polymerase II machinery, POLR3C/RPC3-POLR3F/RPC6-POLR3G/RPC7 heterotrimer required for transcription initiation and POLR3D/RPC4-POLR3E/RPC5 heterodimer involved in both transcription initiation and termination. Component of the PAQosome complex which is responsible for the biogenesis of several protein complexes and which consists of R2TP complex members RUVBL1, RUVBL2, RPAP3 and PIH1D1, URI complex members PFDN2, PFDN6, PDRG1, UXT and URI1 as well as ASDURF, POLR2E and DNAAF10/WDR92. Interacts with URI1. As to quaternary structure, (Microbial infection) Interacts with HBV protein X.

It is found in the nucleus. It localises to the nucleolus. Its function is as follows. DNA-dependent RNA polymerase catalyzes the transcription of DNA into RNA using the four ribonucleoside triphosphates as substrates. Common component of RNA polymerases I, II and III which synthesize ribosomal RNA precursors, mRNA precursors and many functional non-coding RNAs, and small RNAs, such as 5S rRNA and tRNAs, respectively. Pol II is the central component of the basal RNA polymerase II transcription machinery. Pols are composed of mobile elements that move relative to each other. In Pol II, POLR2E/RPABC1 is part of the lower jaw surrounding the central large cleft and thought to grab the incoming DNA template. The polypeptide is DNA-directed RNA polymerases I, II, and III subunit RPABC1 (Homo sapiens (Human)).